A 26-amino-acid chain; its full sequence is Bifunctional protein PutA (26 aa).

The tract at residues M1–D26 is disordered. The segment covering K9–D26 has biased composition (basic and acidic residues).

The cofactor is FAD.

The catalysed reaction is L-proline + a quinone = (S)-1-pyrroline-5-carboxylate + a quinol + H(+). It carries out the reaction L-glutamate 5-semialdehyde + NAD(+) + H2O = L-glutamate + NADH + 2 H(+). It participates in amino-acid degradation; L-proline degradation into L-glutamate; L-glutamate from L-proline: step 1/2. It functions in the pathway amino-acid degradation; L-proline degradation into L-glutamate; L-glutamate from L-proline: step 2/2. Its function is as follows. Oxidizes proline to glutamate for use as a carbon and nitrogen source and also function as a transcriptional repressor of the put operon. The polypeptide is Bifunctional protein PutA (putA) (Klebsiella pneumoniae).